The chain runs to 338 residues: 1-aminocyclopropane-1-carboxylate deaminase (338 aa).

N6-(pyridoxal phosphate)lysine is present on lysine 51. Residue serine 78 is the Nucleophile of the active site.

Belongs to the ACC deaminase/D-cysteine desulfhydrase family. Homotrimer. The cofactor is pyridoxal 5'-phosphate.

It carries out the reaction 1-aminocyclopropane-1-carboxylate + H2O = 2-oxobutanoate + NH4(+). Its function is as follows. Catalyzes a cyclopropane ring-opening reaction, the irreversible conversion of 1-aminocyclopropane-1-carboxylate (ACC) to ammonia and alpha-ketobutyrate. Allows growth on ACC as a nitrogen source. This chain is 1-aminocyclopropane-1-carboxylate deaminase, found in Paraburkholderia xenovorans (strain LB400).